We begin with the raw amino-acid sequence, 552 residues long: Hydroxylamine reductase (552 aa).

Residues Cys5, Cys8, Cys20, and Cys27 each contribute to the [2Fe-2S] cluster site. 8 residues coordinate hybrid [4Fe-2O-2S] cluster: His251, Glu275, Cys319, Cys407, Cys435, Cys460, Glu494, and Lys496. At Cys407 the chain carries Cysteine persulfide.

Belongs to the HCP family. It depends on [2Fe-2S] cluster as a cofactor. Hybrid [4Fe-2O-2S] cluster serves as cofactor.

It localises to the cytoplasm. The enzyme catalyses A + NH4(+) + H2O = hydroxylamine + AH2 + H(+). Catalyzes the reduction of hydroxylamine to form NH(3) and H(2)O. In Shigella boydii serotype 4 (strain Sb227), this protein is Hydroxylamine reductase.